Reading from the N-terminus, the 143-residue chain is UPF0047 protein MTH_771 (143 aa).

This sequence belongs to the UPF0047 family.

The polypeptide is UPF0047 protein MTH_771 (Methanothermobacter thermautotrophicus (strain ATCC 29096 / DSM 1053 / JCM 10044 / NBRC 100330 / Delta H) (Methanobacterium thermoautotrophicum)).